The following is a 125-amino-acid chain: MLKKIFLVGIGGGIGSVLRFVVSLLIVRIRFSIFPLTTFVVNLLGCFFVGILVGLSLKNNWLDENVKIFFITGFCGGFTTFSSFSLENFQLYQAGNYHTLVLYILINIIAGCAAVLLGYILTEFF.

4 consecutive transmembrane segments (helical) span residues 5–25 (IFLV…VSLL), 33–53 (IFPL…GILV), 66–86 (VKIF…SFSL), and 100–120 (LVLY…LGYI). Na(+) is bound by residues Gly76 and Thr79.

The protein belongs to the fluoride channel Fluc/FEX (TC 1.A.43) family.

It localises to the cell inner membrane. It catalyses the reaction fluoride(in) = fluoride(out). Its activity is regulated as follows. Na(+) is not transported, but it plays an essential structural role and its presence is essential for fluoride channel function. Functionally, fluoride-specific ion channel. Important for reducing fluoride concentration in the cell, thus reducing its toxicity. This chain is Fluoride-specific ion channel FluC, found in Azobacteroides pseudotrichonymphae genomovar. CFP2.